The primary structure comprises 60 residues: Large ribosomal subunit protein uL30 (60 aa).

Belongs to the universal ribosomal protein uL30 family. In terms of assembly, part of the 50S ribosomal subunit.

The chain is Large ribosomal subunit protein uL30 from Bacillus mycoides (strain KBAB4) (Bacillus weihenstephanensis).